The chain runs to 778 residues: Phosphoribosylformylglycinamidine synthase subunit PurL (778 aa).

His-44 is an active-site residue. ATP-binding residues include Tyr-47 and Lys-86. Glu-88 lines the Mg(2+) pocket. Substrate contacts are provided by residues 89–92 and Arg-111; that span reads SHNH. His-90 serves as the catalytic Proton acceptor. Mg(2+) contacts are provided by Asp-112 and Asp-265. 309–311 serves as a coordination point for substrate; that stretch reads ESQ. Positions 455–474 are disordered; the sequence is TRQPPGEGLPGRSGQAGPPK. Residues Asn-518 and Gly-555 each contribute to the ATP site. A Mg(2+)-binding site is contributed by Asn-556. Ser-558 is a binding site for substrate.

This sequence belongs to the FGAMS family. In terms of assembly, monomer. Part of the FGAM synthase complex composed of 1 PurL, 1 PurQ and 2 PurS subunits.

The protein resides in the cytoplasm. The catalysed reaction is N(2)-formyl-N(1)-(5-phospho-beta-D-ribosyl)glycinamide + L-glutamine + ATP + H2O = 2-formamido-N(1)-(5-O-phospho-beta-D-ribosyl)acetamidine + L-glutamate + ADP + phosphate + H(+). Its pathway is purine metabolism; IMP biosynthesis via de novo pathway; 5-amino-1-(5-phospho-D-ribosyl)imidazole from N(2)-formyl-N(1)-(5-phospho-D-ribosyl)glycinamide: step 1/2. Its function is as follows. Part of the phosphoribosylformylglycinamidine synthase complex involved in the purines biosynthetic pathway. Catalyzes the ATP-dependent conversion of formylglycinamide ribonucleotide (FGAR) and glutamine to yield formylglycinamidine ribonucleotide (FGAM) and glutamate. The FGAM synthase complex is composed of three subunits. PurQ produces an ammonia molecule by converting glutamine to glutamate. PurL transfers the ammonia molecule to FGAR to form FGAM in an ATP-dependent manner. PurS interacts with PurQ and PurL and is thought to assist in the transfer of the ammonia molecule from PurQ to PurL. In Symbiobacterium thermophilum (strain DSM 24528 / JCM 14929 / IAM 14863 / T), this protein is Phosphoribosylformylglycinamidine synthase subunit PurL.